We begin with the raw amino-acid sequence, 175 residues long: Ribosome maturation factor RimM (175 aa).

Residues 96-172 enclose the PRC barrel domain; the sequence is PDTYYDHQLE…LIEIDPPDGL (77 aa).

This sequence belongs to the RimM family. In terms of assembly, binds ribosomal protein uS19.

The protein localises to the cytoplasm. In terms of biological role, an accessory protein needed during the final step in the assembly of 30S ribosomal subunit, possibly for assembly of the head region. Essential for efficient processing of 16S rRNA. May be needed both before and after RbfA during the maturation of 16S rRNA. It has affinity for free ribosomal 30S subunits but not for 70S ribosomes. The polypeptide is Ribosome maturation factor RimM (Mycobacterium avium (strain 104)).